Consider the following 714-residue polypeptide: Calpain-1 catalytic subunit (714 aa).

A Calpain catalytic domain is found at leucine 55–threonine 354. Ca(2+) contacts are provided by glutamine 109 and aspartate 114. Residues cysteine 115, histidine 272, and asparagine 296 contribute to the active site. Positions 316, 318, and 323 each coordinate Ca(2+). Threonine 354 is subject to Phosphothreonine. A domain III region spans residues proline 355–aspartate 526. Residues glutamine 527–glutamate 542 are linker. EF-hand domains are found at residues glutamate 541–lysine 576, phenylalanine 585–arginine 618, asparagine 615–lysine 650, and valine 680–alanine 714. The tract at residues isoleucine 543–phenylalanine 713 is domain IV. Ca(2+) contacts are provided by aspartate 598, aspartate 600, asparagine 602, lysine 604, glutamate 609, aspartate 628, aspartate 630, serine 632, serine 634, and glutamate 639.

This sequence belongs to the peptidase C2 family. Forms a heterodimer with a small (regulatory) subunit CAPNS1. Ca(2+) is required as a cofactor. Undergoes calcium-induced successive autoproteolytic cleavages that generate a membrane-bound 78 kDa active form and an intracellular 75 kDa active form. Calpastatin reduces with high efficiency the transition from 78 kDa to 75 kDa calpain forms.

It is found in the cytoplasm. The protein localises to the cell membrane. The enzyme catalyses Broad endopeptidase specificity.. With respect to regulation, activated by micromolar concentrations of calcium and inhibited by calpastatin. In terms of biological role, calcium-regulated non-lysosomal thiol-protease which catalyzes limited proteolysis of substrates involved in cytoskeletal remodeling and signal transduction. Proteolytically cleaves CTBP1. Cleaves and activates caspase-7 (CASP7). The protein is Calpain-1 catalytic subunit of Pongo abelii (Sumatran orangutan).